The following is a 353-amino-acid chain: Photosystem II protein D1 (353 aa).

Thr2 bears the N-acetylthreonine mark. Thr2 is subject to Phosphothreonine. The next 3 membrane-spanning stretches (helical) occupy residues 29 to 46 (YIGW…TATA), 118 to 133 (HFLL…EWEL), and 142 to 156 (WIAV…AAAA). Residue His118 coordinates chlorophyll a. A pheophytin a-binding site is contributed by Tyr126. [CaMn4O5] cluster is bound by residues Asp170 and Glu189. A helical membrane pass occupies residues 197-218 (FHMLGVAGVFGGSLFSAMHGSL). Chlorophyll a is bound at residue His198. A quinone contacts are provided by residues His215 and 264 to 265 (SF). His215 serves as a coordination point for Fe cation. His272 contacts Fe cation. A helical membrane pass occupies residues 274–288 (FLAAWPVVGIWFTAL). The [CaMn4O5] cluster site is built by His332, Glu333, Asp342, and Ala344. Positions 345-353 (SVEAPSVNG) are excised as a propeptide.

Belongs to the reaction center PufL/M/PsbA/D family. As to quaternary structure, PSII is composed of 1 copy each of membrane proteins PsbA, PsbB, PsbC, PsbD, PsbE, PsbF, PsbH, PsbI, PsbJ, PsbK, PsbL, PsbM, PsbT, PsbX, PsbY, PsbZ, Psb30/Ycf12, at least 3 peripheral proteins of the oxygen-evolving complex and a large number of cofactors. It forms dimeric complexes. The cofactor is The D1/D2 heterodimer binds P680, chlorophylls that are the primary electron donor of PSII, and subsequent electron acceptors. It shares a non-heme iron and each subunit binds pheophytin, quinone, additional chlorophylls, carotenoids and lipids. D1 provides most of the ligands for the Mn4-Ca-O5 cluster of the oxygen-evolving complex (OEC). There is also a Cl(-1) ion associated with D1 and D2, which is required for oxygen evolution. The PSII complex binds additional chlorophylls, carotenoids and specific lipids.. In terms of processing, tyr-161 forms a radical intermediate that is referred to as redox-active TyrZ, YZ or Y-Z. C-terminally processed by CTPA; processing is essential to allow assembly of the oxygen-evolving complex and thus photosynthetic growth.

The protein resides in the plastid. The protein localises to the chloroplast thylakoid membrane. The enzyme catalyses 2 a plastoquinone + 4 hnu + 2 H2O = 2 a plastoquinol + O2. Its function is as follows. Photosystem II (PSII) is a light-driven water:plastoquinone oxidoreductase that uses light energy to abstract electrons from H(2)O, generating O(2) and a proton gradient subsequently used for ATP formation. It consists of a core antenna complex that captures photons, and an electron transfer chain that converts photonic excitation into a charge separation. The D1/D2 (PsbA/PsbD) reaction center heterodimer binds P680, the primary electron donor of PSII as well as several subsequent electron acceptors. This chain is Photosystem II protein D1, found in Huperzia lucidula (Shining clubmoss).